Here is a 285-residue protein sequence, read N- to C-terminus: Nucleotide-binding protein Pnap_0906 (285 aa).

Position 8 to 15 (8 to 15) interacts with ATP; it reads GMSGSGKS. Residue 57-60 coordinates GTP; it reads DVRS.

The protein belongs to the RapZ-like family.

In terms of biological role, displays ATPase and GTPase activities. The protein is Nucleotide-binding protein Pnap_0906 of Polaromonas naphthalenivorans (strain CJ2).